Consider the following 711-residue polypeptide: Polyribonucleotide nucleotidyltransferase (711 aa).

2 residues coordinate Mg(2+): Asp-490 and Asp-496. In terms of domain architecture, KH spans 557–619 (PRIETMTIPK…KCIDDAMRII (63 aa)). The 71-residue stretch at 629 to 699 (GEVYVGKVRS…KTGKFKLSHK (71 aa)) folds into the S1 motif domain.

This sequence belongs to the polyribonucleotide nucleotidyltransferase family. Requires Mg(2+) as cofactor.

It localises to the cytoplasm. The enzyme catalyses RNA(n+1) + phosphate = RNA(n) + a ribonucleoside 5'-diphosphate. Involved in mRNA degradation. Catalyzes the phosphorolysis of single-stranded polyribonucleotides processively in the 3'- to 5'-direction. The protein is Polyribonucleotide nucleotidyltransferase of Phocaeicola vulgatus (strain ATCC 8482 / DSM 1447 / JCM 5826 / CCUG 4940 / NBRC 14291 / NCTC 11154) (Bacteroides vulgatus).